The chain runs to 374 residues: C-C chemokine receptor type 2 (374 aa).

The Extracellular segment spans residues 1 to 42 (MLSTSRSRFIRNTNESGEEVTTFFDYDYGAPCHKFDVKQIGA). An N-linked (GlcNAc...) asparagine glycan is attached at N14. Y26 is subject to Sulfotyrosine. The helical transmembrane segment at 43-70 (QLLPPLYSLVFIFGFVGNMLVVLILINC) threads the bilayer. The Cytoplasmic segment spans residues 71-80 (KKLKCLTDIY). A helical transmembrane segment spans residues 81–100 (LLNLAISDLLFLITLPLWAH). At 101–114 (SAANEWVFGNAMCK) the chain is on the extracellular side. A disulfide bridge links C113 with C190. The helical transmembrane segment at 115–136 (LFTGLYHIGYFGGIFFIILLTI) threads the bilayer. Residues 137-153 (DRYLAIVHAVFALKART) lie on the Cytoplasmic side of the membrane. Y139 carries the post-translational modification Phosphotyrosine; by JAK2. A helical membrane pass occupies residues 154–178 (VTFGVVTSVITWLVAVFASVPGIIF). The Extracellular segment spans residues 179 to 206 (TKCQKEDSVYVCGPYFPRGWNNFHTIMR). A helical transmembrane segment spans residues 207-226 (NILGLVLPLLIMVICYSGIL). Residues 227-243 (KTLLRCRNEKKRHRAVR) lie on the Cytoplasmic side of the membrane. A helical membrane pass occupies residues 244-268 (VIFTIMIVYFLFWTPYNIVILLNTF). Over 269–285 (QEFFGLSNCESTSQLDQ) the chain is Extracellular. Residues 286–309 (ATQVTETLGMTHCCINPIIYAFVG) form a helical membrane-spanning segment. Residues 310–374 (EKFRSLFHIA…EASLQDKEGA (65 aa)) are Cytoplasmic-facing. Residues 348-374 (QGLLDGRGKGKSIGRAPEASLQDKEGA) are disordered.

This sequence belongs to the G-protein coupled receptor 1 family. Interacts with ARRB1. Interacts (via extracellular N-terminal region) with beta-defensin DEFB106A/DEFB106B; this interaction may preferentially require specific tyrosine sulfation on CCR2. Interacts with NUP85; the interaction is required for CCR2 clusters formation on the cell membrane and CCR2 signaling. As to quaternary structure, (Microbial infection) Binds to HIV-1 Tat. N-glycosylated. Post-translationally, sulfation increases the affinity for both monomeric and dimeric CCL2 with stronger binding to the monomeric form. Binding of sulfated CCR2 to CCL2 promotes conversion of CCL2 from dimer to monomer. Expressed by monocytes and IL2-activated NK cells. Abundantly expressed on CD14+/CD16- monocytes and weakly on CD14+/CD16+ monocytes, type 2 dendritic cells (DCs) and plasmacytoid DCs (at protein level).

Its subcellular location is the cell membrane. Key functional receptor for CCL2 but can also bind CCL7, and CCL12. Also transduces signaling mediated by CCL13. Its binding with CCL2 on monocytes and macrophages mediates chemotaxis and migration induction through the activation of the PI3K cascade, the small G protein Rac and lamellipodium protrusion. Also acts as a receptor for the beta-defensin DEFB106A/DEFB106B. Regulates the expression of T-cell inflammatory cytokines and T-cell differentiation, promoting the differentiation of T-cells into T-helper 17 cells (Th17) during inflammation. Facilitates the export of mature thymocytes by enhancing directional movement of thymocytes to sphingosine-1-phosphate stimulation and up-regulation of S1P1R expression; signals through the JAK-STAT pathway to regulate FOXO1 activity leading to an increased expression of S1P1R. Plays an important role in mediating peripheral nerve injury-induced neuropathic pain. Increases NMDA-mediated synaptic transmission in both dopamine D1 and D2 receptor-containing neurons, which may be caused by MAPK/ERK-dependent phosphorylation of GRIN2B/NMDAR2B. Mediates the recruitment of macrophages and monocytes to the injury site following brain injury. Its function is as follows. (Microbial infection) Alternative coreceptor with CD4 for HIV-1 infection. In Homo sapiens (Human), this protein is C-C chemokine receptor type 2 (CCR2).